Here is a 96-residue protein sequence, read N- to C-terminus: MAEVEETLKRLQSQKGVQGIIVVNTEGIPIKSTMDNPTTTQYANLMHNFILKARSTVREIDPQNDLTFLRIRSKKNEIMVAPDKDYFLIVIQNPTE.

Ala2 carries the N-acetylalanine modification.

It belongs to the GAMAD family. As to quaternary structure, homodimer. The cytoplasmic dynein 1 complex consists of two catalytic heavy chains (HCs) and a number of non-catalytic subunits presented by intermediate chains (ICs), light intermediate chains (LICs) and light chains (LCs); the composition seems to vary in respect to the IC, LIC and LC composition. The heavy chain homodimer serves as a scaffold for the probable homodimeric assembly of the respective non-catalytic subunits. The ICs and LICs bind directly to the HC dimer and the LCs assemble on the IC dimer. Interacts with DYNLRB2. Interacts with DYNC1I1 and DYNC1I2. Interacts with RAB6A isoform 1 (GTP-bound); the interaction is direct. Interacts with RAB6A isoform 2 (GDP-bound); the interaction is direct. Interacts with RAB6B (GDP-bound).

It is found in the cytoplasm. It localises to the cytoskeleton. Its function is as follows. Acts as one of several non-catalytic accessory components of the cytoplasmic dynein 1 complex that are thought to be involved in linking dynein to cargos and to adapter proteins that regulate dynein function. Cytoplasmic dynein 1 acts as a motor for the intracellular retrograde motility of vesicles and organelles along microtubules. The chain is Dynein light chain roadblock-type 1 (Dynlrb1) from Mus musculus (Mouse).